Here is a 130-residue protein sequence, read N- to C-terminus: Small ribosomal subunit protein uS8 (130 aa).

Belongs to the universal ribosomal protein uS8 family. As to quaternary structure, part of the 30S ribosomal subunit. Contacts proteins S5 and S12.

In terms of biological role, one of the primary rRNA binding proteins, it binds directly to 16S rRNA central domain where it helps coordinate assembly of the platform of the 30S subunit. The protein is Small ribosomal subunit protein uS8 of Aliivibrio fischeri (strain ATCC 700601 / ES114) (Vibrio fischeri).